The following is a 793-amino-acid chain: ATP-dependent RNA helicase DRS1 (793 aa).

The interval Met-1–Ser-208 is disordered. The segment covering Lys-75–Lys-89 has biased composition (basic residues). Composition is skewed to acidic residues over residues Ala-94–Ser-114, Ser-122–Ile-144, and Glu-152–Ala-184. Positions Phe-193–Ser-208 are enriched in low complexity. The Q motif motif lies at Ser-207–Ala-235. Residues Ile-238–Val-416 form the Helicase ATP-binding domain. Ala-251–Thr-258 serves as a coordination point for ATP. The DEAD box signature appears at Asp-364 to Asp-367. A Helicase C-terminal domain is found at Gly-427–Leu-606. The stretch at Glu-560–Glu-630 forms a coiled coil. The interval Gln-645 to Lys-793 is disordered. 2 stretches are compositionally biased toward basic and acidic residues: residues Ser-671–Ser-688 and Lys-726–Gly-740. The segment covering Lys-741–Thr-752 has biased composition (basic residues). Residues Ser-761 to Arg-771 show a composition bias toward basic and acidic residues. The segment covering Gly-782–Lys-793 has biased composition (basic residues).

The protein belongs to the DEAD box helicase family. DDX27/DRS1 subfamily. In terms of assembly, associates with pre-ribosomal particles.

Its subcellular location is the nucleus. The protein resides in the nucleolus. It catalyses the reaction ATP + H2O = ADP + phosphate + H(+). In terms of biological role, ATP-binding RNA helicase involved in ribosome assembly. The protein is ATP-dependent RNA helicase DRS1 (DRS1) of Cryptococcus neoformans var. neoformans serotype D (strain JEC21 / ATCC MYA-565) (Filobasidiella neoformans).